Consider the following 593-residue polypeptide: ATP-dependent RNA helicase MRH4, mitochondrial (593 aa).

The transit peptide at 1-106 directs the protein to the mitochondrion; that stretch reads MFPLRAQSAS…QLRIFPTVRA (106 aa). Positions 42 to 51 are enriched in low complexity; the sequence is GANGANRANG. A disordered region spans residues 42 to 63; the sequence is GANGANRANGTNSSQPESQSSK. A compositionally biased stretch (polar residues) spans 52 to 63; it reads TNSSQPESQSSK. The Q motif signature appears at 130–137; it reads VLKPTPIQ. A Helicase ATP-binding domain is found at 181–399; that stretch reads INSLQKLKVF…NRIFPTDDSI (219 aa). 194–201 contributes to the ATP binding site; that stretch reads AETGSGKT. The DEAD box motif lies at 347–350; it reads DEAD. Residues 433–593 enclose the Helicase C-terminal domain; the sequence is ALAQALYAIT…NAVKRGIQMG (161 aa).

This sequence belongs to the DEAD box helicase family. MRH4 subfamily.

The protein localises to the mitochondrion. The catalysed reaction is ATP + H2O = ADP + phosphate + H(+). In terms of biological role, ATP-binding RNA helicase involved in mitochondrial RNA metabolism. Required for maintenance of mitochondrial DNA. This is ATP-dependent RNA helicase MRH4, mitochondrial (MRH4) from Scheffersomyces stipitis (strain ATCC 58785 / CBS 6054 / NBRC 10063 / NRRL Y-11545) (Yeast).